A 141-amino-acid polypeptide reads, in one-letter code: Large ribosomal subunit protein uL11 (141 aa).

It belongs to the universal ribosomal protein uL11 family. In terms of assembly, part of the ribosomal stalk of the 50S ribosomal subunit. Interacts with L10 and the large rRNA to form the base of the stalk. L10 forms an elongated spine to which L12 dimers bind in a sequential fashion forming a multimeric L10(L12)X complex. In terms of processing, one or more lysine residues are methylated.

In terms of biological role, forms part of the ribosomal stalk which helps the ribosome interact with GTP-bound translation factors. This Streptococcus pneumoniae (strain Hungary19A-6) protein is Large ribosomal subunit protein uL11.